Consider the following 224-residue polypeptide: Jacalin-related lectin 24 (224 aa).

In terms of domain architecture, Jacalin-type lectin spans 8-160 (MFKVGPIGSK…LTSIGIYVYP (153 aa)).

The protein belongs to the jacalin lectin family.

The polypeptide is Jacalin-related lectin 24 (JAL24) (Arabidopsis thaliana (Mouse-ear cress)).